Reading from the N-terminus, the 76-residue chain is DNA-directed RNA polymerase subunit epsilon (76 aa).

The protein belongs to the RNA polymerase subunit epsilon family. In terms of assembly, RNAP is composed of a core of 2 alpha, a beta and a beta' subunit. The core is associated with a delta subunit, and at least one of epsilon or omega. When a sigma factor is associated with the core the holoenzyme is formed, which can initiate transcription.

It catalyses the reaction RNA(n) + a ribonucleoside 5'-triphosphate = RNA(n+1) + diphosphate. In terms of biological role, a non-essential component of RNA polymerase (RNAP). This is DNA-directed RNA polymerase subunit epsilon from Streptococcus gordonii (strain Challis / ATCC 35105 / BCRC 15272 / CH1 / DL1 / V288).